An 85-amino-acid chain; its full sequence is Putative membrane protein insertion efficiency factor (85 aa).

Belongs to the UPF0161 family.

It localises to the cell inner membrane. In terms of biological role, could be involved in insertion of integral membrane proteins into the membrane. This Escherichia fergusonii (strain ATCC 35469 / DSM 13698 / CCUG 18766 / IAM 14443 / JCM 21226 / LMG 7866 / NBRC 102419 / NCTC 12128 / CDC 0568-73) protein is Putative membrane protein insertion efficiency factor.